A 492-amino-acid polypeptide reads, in one-letter code: Catalase (492 aa).

Active-site residues include H65 and N138. Y348 is a heme binding site.

It belongs to the catalase family. Homotetramer. Heme is required as a cofactor.

The protein resides in the cytoplasm. Its subcellular location is the cytosol. It localises to the peroxisome matrix. The catalysed reaction is 2 H2O2 = O2 + 2 H2O. Functionally, catalyzes the degradation of hydrogen peroxide (H(2)O(2)) generated by peroxisomal oxidases to water and oxygen, thereby protecting cells from the toxic effects of hydrogen peroxide. The sequence is that of Catalase (CATA) from Triticum aestivum (Wheat).